We begin with the raw amino-acid sequence, 61 residues long: UPF0434 protein PSEEN1604 (61 aa).

This sequence belongs to the UPF0434 family.

The chain is UPF0434 protein PSEEN1604 from Pseudomonas entomophila (strain L48).